The sequence spans 272 residues: Biglycan (272 aa).

Residues 1-16 (MWPLWLLASLLALSQA) form the signal peptide. The propeptide occupies 17–37 (LPFEQKAFWDFTLDDGLPMLN). 2 O-linked (Xyl...) (glycosaminoglycan) serine glycosylation sites follow: S42 and S48. One can recognise an LRRNT domain in the interval 55 to 91 (ALPPTFSAMCPFGCHCHLRVVQCSDLGLKAVPKEISP). 2 disulfides stabilise this stretch: C64–C70 and C68–C77. 8 LRR repeats span residues 92-113 (DTTLLDLQNNDISELRKDDFKG), 116-137 (HLYALVLVNNKISRSTRRPSAP), 138-161 (DGLKLNYLRISEAKLTGIPKDLPE), 162-183 (TLNELHLDHNKIQAIELEDLLR), 186-209 (KLYRLGLGHNQIRMIENGSLSFLP), 210-232 (TLRELHLDNNKLSRVPAGLPDLK), 233-254 (LLQVVYLHTNNITKVGVNDFCP), and 255-272 (VGFGVKRAYYNGISLFNN).

Belongs to the small leucine-rich proteoglycan (SLRP) family. SLRP class I subfamily. In terms of assembly, homodimer. Forms a ternary complex with MFAP2 and ELN. In terms of processing, the two attached glycosaminoglycan chains can be either chondroitin sulfate or dermatan sulfate. As to expression, found in several connective tissues, especially in articular cartilages.

Its subcellular location is the secreted. The protein localises to the extracellular space. The protein resides in the extracellular matrix. Functionally, may be involved in collagen fiber assembly. This Sus scrofa (Pig) protein is Biglycan (BGN).